We begin with the raw amino-acid sequence, 271 residues long: Putative phosphoenolpyruvate synthase regulatory protein (271 aa).

Position 151–158 (151–158 (GVSRSGKT)) interacts with ADP.

Belongs to the pyruvate, phosphate/water dikinase regulatory protein family. PSRP subfamily.

It carries out the reaction [pyruvate, water dikinase] + ADP = [pyruvate, water dikinase]-phosphate + AMP + H(+). The catalysed reaction is [pyruvate, water dikinase]-phosphate + phosphate + H(+) = [pyruvate, water dikinase] + diphosphate. Its function is as follows. Bifunctional serine/threonine kinase and phosphorylase involved in the regulation of the phosphoenolpyruvate synthase (PEPS) by catalyzing its phosphorylation/dephosphorylation. This Burkholderia vietnamiensis (strain G4 / LMG 22486) (Burkholderia cepacia (strain R1808)) protein is Putative phosphoenolpyruvate synthase regulatory protein.